Consider the following 1191-residue polypeptide: Serine/threonine-protein kinase dkf-2 (1191 aa).

Disordered stretches follow at residues 11–48 (YTSMPSSSTSNHRIDRLSSSSSSTFRRDDFRRHSTTTS) and 108–155 (MLSR…GGHV). The span at 123–139 (TPDDHYSNPSDKRREVP) shows a compositional bias: basic and acidic residues. Positions 140–150 (SIRSTSSNSSS) are enriched in low complexity. 2 Phorbol-ester/DAG-type zinc fingers span residues 314-364 (PHTL…PNNC) and 466-531 (PHTF…AKDC). Positions 549-594 (VSEDRDDDLSLRSGSGGHKKAQNTPSAPLQGSEGSGSPGGAVVSFA) are disordered. The PH domain maps to 632–713 (LLKEGWIVHY…VYFVYSSLTD (82 aa)). The disordered stretch occupies residues 730-786 (PSTVSSTDSGYLGSSGASSSCVRSREGSTVSSTITVDRTRRGGSTTSTENSEAESES). Positions 738-751 (SGYLGSSGASSSCV) are enriched in low complexity. A compositionally biased stretch (polar residues) spans 756 to 765 (GSTVSSTITV). Low complexity predominate over residues 773-786 (STTSTENSEAESES). The Protein kinase domain occupies 891–1147 (IFAEEVLGSG…VAKAQSHIWM (257 aa)). Residues 897–905 (LGSGQFGTV) and Lys-920 each bind ATP. Asp-1014 acts as the Proton acceptor in catalysis. Phosphoserine occurs at positions 1046 and 1050.

It belongs to the protein kinase superfamily. CAMK Ser/Thr protein kinase family. PKD subfamily. Mg(2+) is required as a cofactor. In terms of processing, phosphorylation on Ser-1046 is the dominant regulator of catalysis, phosphorylation on Ser-1050 has a lesser effect. Prolonged phosphorylation results in ubiquitination and degradation.

It is found in the cytoplasm. The protein localises to the membrane. It catalyses the reaction L-seryl-[protein] + ATP = O-phospho-L-seryl-[protein] + ADP + H(+). It carries out the reaction L-threonyl-[protein] + ATP = O-phospho-L-threonyl-[protein] + ADP + H(+). With respect to regulation, activated by DAG and phorbol esters. Phorbol-ester/DAG-type domain 1 binds phorbol ester with low affinity. Phorbol-ester/DAG-type domain 2 binds phorbol ester with high affinity and targets the kinase to the cell periphery, enabling phosphorylation and activation by colocalized tpa-1. Both domains 1 and 2 appear to bind DAG with equal affinity so may contribute equally to translocation and activation. Its function is as follows. Converts transient diacylglycerol (DAG) signals into prolonged physiological effects, downstream of PKC. Acts in the intestine to regulate both innate immunity by promoting activation of pmk-1 and also stress response and life span by acting as an upstream, negative regulator of the daf-16 transcription factor. The chain is Serine/threonine-protein kinase dkf-2 from Caenorhabditis briggsae.